We begin with the raw amino-acid sequence, 340 residues long: Chitinase 2 (340 aa).

A signal peptide spans 1-32 (MSTPRAAASLAKKAALVALAVLAAALATAARA). The region spanning 33–73 (EQCGAQAGGARCPNCLCCSRWGWCGTTSDFCGDGCQSQCSG) is the Chitin-binding type-1 domain. Cystine bridges form between C35-C50, C44-C56, C47-C74, C49-C63, C67-C71, C110-C172, C184-C192, and C291-C323. E154 acts as the Proton donor in catalysis.

Belongs to the glycosyl hydrolase 19 family. Chitinase class I subfamily. In terms of tissue distribution, expressed in roots, sheaths and meristems.

The catalysed reaction is Random endo-hydrolysis of N-acetyl-beta-D-glucosaminide (1-&gt;4)-beta-linkages in chitin and chitodextrins.. Functionally, hydrolyzes chitin and plays a role in defense against fungal pathogens containing chitin. Its overexpression confers enhanced resistance to sheath blight pathogen (R.solani). In Oryza sativa subsp. japonica (Rice), this protein is Chitinase 2 (Cht2).